Here is a 102-residue protein sequence, read N- to C-terminus: Small ribosomal subunit protein uS10 (102 aa).

The protein belongs to the universal ribosomal protein uS10 family. In terms of assembly, part of the 30S ribosomal subunit.

In terms of biological role, involved in the binding of tRNA to the ribosomes. The polypeptide is Small ribosomal subunit protein uS10 (Hyperthermus butylicus (strain DSM 5456 / JCM 9403 / PLM1-5)).